A 502-amino-acid chain; its full sequence is Glutamate--tRNA ligase (502 aa).

The short motif at 12-22 (PSPTGYLHVGG) is the 'HIGH' region element. The short motif at 259–263 (KLSKR) is the 'KMSKS' region element. Residue K262 participates in ATP binding.

The protein belongs to the class-I aminoacyl-tRNA synthetase family. Glutamate--tRNA ligase type 1 subfamily. Monomer.

The protein resides in the cytoplasm. The enzyme catalyses tRNA(Glu) + L-glutamate + ATP = L-glutamyl-tRNA(Glu) + AMP + diphosphate. Its function is as follows. Catalyzes the attachment of glutamate to tRNA(Glu) in a two-step reaction: glutamate is first activated by ATP to form Glu-AMP and then transferred to the acceptor end of tRNA(Glu). In Chlorobium chlorochromatii (strain CaD3), this protein is Glutamate--tRNA ligase.